Reading from the N-terminus, the 119-residue chain is Ribonuclease P protein component (119 aa).

The protein belongs to the RnpA family. In terms of assembly, consists of a catalytic RNA component (M1 or rnpB) and a protein subunit.

The catalysed reaction is Endonucleolytic cleavage of RNA, removing 5'-extranucleotides from tRNA precursor.. Its function is as follows. RNaseP catalyzes the removal of the 5'-leader sequence from pre-tRNA to produce the mature 5'-terminus. It can also cleave other RNA substrates such as 4.5S RNA. The protein component plays an auxiliary but essential role in vivo by binding to the 5'-leader sequence and broadening the substrate specificity of the ribozyme. This Listeria monocytogenes serotype 4a (strain HCC23) protein is Ribonuclease P protein component.